A 522-amino-acid chain; its full sequence is 5,6-dihydroxyindole-2-carboxylic acid oxidase (522 aa).

Residues 1 to 21 form the signal peptide; that stretch reads MLRTSCGGMLLLVHALGLVRA. Residues 22 to 470 lie on the Lumenal, melanosome side of the membrane; it reads QFPRACVTPE…RPLTPTQIVT (449 aa). Intrachain disulfides connect C27/C38, C39/C59, C50/C89, C91/C100, and C103/C112. 2 N-linked (GlcNAc...) asparagine glycosylation sites follow: N164 and N171. Zn(2+)-binding residues include H182, H205, and H214. 2 disulfides stabilise this stretch: C248–C251 and C280–C293. An N-linked (GlcNAc...) asparagine glycan is attached at N294. The Zn(2+) site is built by H367 and H371. N375 carries an N-linked (GlcNAc...) asparagine glycan. Zn(2+) is bound at residue H394. The chain crosses the membrane as a helical span at residues 471-491; that stretch reads VAVVAALLLVAIIFAASTCVV. The Cytoplasmic portion of the chain corresponds to 492–522; that stretch reads HLRGNRTEGRQPLLGDQYQRYEDHNKTQSVV.

Belongs to the tyrosinase family. Cu(2+) serves as cofactor. The cofactor is Zn(2+).

The protein localises to the melanosome membrane. The catalysed reaction is 2 5,6-dihydroxyindole-2-carboxylate + O2 = 2 indole-5,6-quinone-2-carboxylate + 2 H2O. The protein operates within pigment biosynthesis; melanin biosynthesis. In terms of biological role, plays a role in melanin biosynthesis. Catalyzes the oxidation of 5,6-dihydroxyindole-2-carboxylic acid (DHICA) into indole-5,6-quinone-2-carboxylic acid. May regulate or influence the type of melanin synthesized. Also to a lower extent, capable of hydroxylating tyrosine and producing melanin. This is 5,6-dihydroxyindole-2-carboxylic acid oxidase (tyrp1) from Carassius auratus (Goldfish).